The sequence spans 311 residues: MAKDFQDIQQLSSEENDHPFHQGEGPGTRRLNPRRGNPFLKGPPPAQPLAQRLCSMVCFSLLALSFNILLLVVICVTGSQSEGHGGAQLQAELRSLKEAFSNFSSSTLTEVQAISTHGGSVGDKITSLGAKLEKQQQDLKADHDALLFHLKHFPVDLRFVACQMELLHSNGSQRTCCPVNWVEHQGSCYWFSHSGKAWAEAEKYCQLENAHLVVINSWEEQKFIVQHTNPFNTWIGLTDSDGSWKWVDGTDYRHNYKNWAVTQPDNWHGHELGGSEDCVEVQPDGRWNDDFCLQVYRWVCEKRRNATGEVA.

Residues 1–44 are disordered; the sequence is MAKDFQDIQQLSSEENDHPFHQGEGPGTRRLNPRRGNPFLKGPP. Residues 1-58 lie on the Cytoplasmic side of the membrane; it reads MAKDFQDIQQLSSEENDHPFHQGEGPGTRRLNPRRGNPFLKGPPPAQPLAQRLCSMVC. The Endocytosis signal signature appears at 5 to 8; sequence FQDI. The residue at position 13 (Ser-13) is a Phosphoserine. The S-palmitoyl cysteine moiety is linked to residue Cys-54. A helical; Signal-anchor for type II membrane protein membrane pass occupies residues 59 to 79; it reads FSLLALSFNILLLVVICVTGS. Residues 80-311 lie on the Extracellular side of the membrane; that stretch reads QSEGHGGAQL…KRRNATGEVA (232 aa). 2 N-linked (GlcNAc...) asparagine glycosylation sites follow: Asn-102 and Asn-170. Residues 176–302 form the C-type lectin domain; the sequence is CCPVNWVEHQ…LQVYRWVCEK (127 aa). 3 disulfide bridges follow: Cys-177–Cys-188, Cys-205–Cys-300, and Cys-278–Cys-292. An N-linked (GlcNAc...) asparagine glycan is attached at Asn-305.

As to quaternary structure, the functioning ligand-binding unit of this receptor is thought to be at least a dimer. Interacts with LASS2. In terms of assembly, (Microbial infection) Interacts with hepatitis E virus capsid protein ORF2. As to expression, expressed exclusively in hepatic parenchymal cells.

The protein resides in the membrane. In terms of biological role, mediates the endocytosis of plasma glycoproteins to which the terminal sialic acid residue on their complex carbohydrate moieties has been removed. The receptor recognizes terminal galactose and N-acetylgalactosamine units. After ligand binding to the receptor, the resulting complex is internalized and transported to a sorting organelle, where receptor and ligand are disassociated. The receptor then returns to the cell membrane surface. The chain is Asialoglycoprotein receptor 2 (ASGR2) from Homo sapiens (Human).